Reading from the N-terminus, the 508-residue chain is Maturase K (508 aa).

This sequence belongs to the intron maturase 2 family. MatK subfamily.

It localises to the plastid. The protein resides in the chloroplast. Usually encoded in the trnK tRNA gene intron. Probably assists in splicing its own and other chloroplast group II introns. In Wolffia arrhiza (Rootless water-meal), this protein is Maturase K.